The chain runs to 115 residues: NAD(P)H-quinone oxidoreductase subunit M (115 aa).

The protein belongs to the complex I NdhM subunit family. In terms of assembly, NDH-1 can be composed of about 15 different subunits; different subcomplexes with different compositions have been identified which probably have different functions.

It localises to the cellular thylakoid membrane. The catalysed reaction is a plastoquinone + NADH + (n+1) H(+)(in) = a plastoquinol + NAD(+) + n H(+)(out). The enzyme catalyses a plastoquinone + NADPH + (n+1) H(+)(in) = a plastoquinol + NADP(+) + n H(+)(out). In terms of biological role, NDH-1 shuttles electrons from an unknown electron donor, via FMN and iron-sulfur (Fe-S) centers, to quinones in the respiratory and/or the photosynthetic chain. The immediate electron acceptor for the enzyme in this species is believed to be plastoquinone. Couples the redox reaction to proton translocation, and thus conserves the redox energy in a proton gradient. Cyanobacterial NDH-1 also plays a role in inorganic carbon-concentration. This Prochlorococcus marinus (strain NATL1A) protein is NAD(P)H-quinone oxidoreductase subunit M.